The primary structure comprises 213 residues: MKPEFWQDRWNKDQIGWHQKSANPHLVKYWPTLNISQGSTVIVPLCGKSLDMRWLEGLGYNVLGVELSEKACKQYFDQMELEPKVSKNASGKFTIYEAGNTQIWCGDLFDLDADDVKYVSALYDRASVIALPPDMRERYAAHLGALIPDPQGLIITLDYDQSKMNGPPHAVSDAEVQRLFGTNWKLTLLEEVDKKDMFKEEGIEPVERVYKLN.

S-adenosyl-L-methionine contacts are provided by Trp10, Leu45, Glu66, and Arg125.

The protein belongs to the class I-like SAM-binding methyltransferase superfamily. TPMT family.

It localises to the cytoplasm. The enzyme catalyses S-adenosyl-L-methionine + a thiopurine = S-adenosyl-L-homocysteine + a thiopurine S-methylether.. This chain is Probable thiopurine S-methyltransferase, found in Yarrowia lipolytica (strain CLIB 122 / E 150) (Yeast).